A 380-amino-acid chain; its full sequence is Erythronate-4-phosphate dehydrogenase (380 aa).

Residues serine 45 and threonine 66 each contribute to the substrate site. NAD(+)-binding positions include 126 to 127 (QV), aspartate 146, threonine 175, 206 to 208 (ASR), and aspartate 232. Arginine 208 is an active-site residue. Glutamate 237 is an active-site residue. The Proton donor role is filled by histidine 254. Glycine 257 is an NAD(+) binding site. Residue tyrosine 258 coordinates substrate.

Belongs to the D-isomer specific 2-hydroxyacid dehydrogenase family. PdxB subfamily. Homodimer.

The protein resides in the cytoplasm. The catalysed reaction is 4-phospho-D-erythronate + NAD(+) = (R)-3-hydroxy-2-oxo-4-phosphooxybutanoate + NADH + H(+). It functions in the pathway cofactor biosynthesis; pyridoxine 5'-phosphate biosynthesis; pyridoxine 5'-phosphate from D-erythrose 4-phosphate: step 2/5. Catalyzes the oxidation of erythronate-4-phosphate to 3-hydroxy-2-oxo-4-phosphonooxybutanoate. In Pseudomonas paraeruginosa (strain DSM 24068 / PA7) (Pseudomonas aeruginosa (strain PA7)), this protein is Erythronate-4-phosphate dehydrogenase.